We begin with the raw amino-acid sequence, 630 residues long: 1-deoxy-D-xylulose-5-phosphate synthase (630 aa).

Residues His72 and 113-115 contribute to the thiamine diphosphate site; that span reads GHS. Residue Asp144 participates in Mg(2+) binding. Thiamine diphosphate is bound by residues 145–146, Asn173, Tyr284, and Glu367; that span reads GA. Asn173 is a binding site for Mg(2+).

Belongs to the transketolase family. DXPS subfamily. Homodimer. Mg(2+) is required as a cofactor. Requires thiamine diphosphate as cofactor.

It carries out the reaction D-glyceraldehyde 3-phosphate + pyruvate + H(+) = 1-deoxy-D-xylulose 5-phosphate + CO2. It participates in metabolic intermediate biosynthesis; 1-deoxy-D-xylulose 5-phosphate biosynthesis; 1-deoxy-D-xylulose 5-phosphate from D-glyceraldehyde 3-phosphate and pyruvate: step 1/1. In terms of biological role, catalyzes the acyloin condensation reaction between C atoms 2 and 3 of pyruvate and glyceraldehyde 3-phosphate to yield 1-deoxy-D-xylulose-5-phosphate (DXP). This is 1-deoxy-D-xylulose-5-phosphate synthase from Bacillus cereus (strain ATCC 10987 / NRS 248).